The primary structure comprises 378 residues: uncharacterized protein (378 aa).

Residues 1-11 (MSQQTTPAEQK) show a composition bias toward polar residues. Positions 1-33 (MSQQTTPAEQKSLQRKKPPFRADQVGSLLRSEP) are disordered.

It to B.subtilis YxjH.

This is an uncharacterized protein from Bacillus subtilis (strain 168).